The primary structure comprises 204 residues: Prephenate decarboxylase (204 aa).

It belongs to the prephenate decarboxylase family.

It localises to the cytoplasm. The catalysed reaction is prephenate + H(+) = 3-[(4R)-4-hydroxycyclohexa-1,5-dien-1-yl]-2-oxopropanoate + CO2. Its pathway is antibiotic biosynthesis; bacilysin biosynthesis. Part of the bacABCDEF operon responsible for the biosynthesis of the nonribosomally synthesized dipeptide antibiotic bacilysin, composed of L-alanine and L-anticapsin. Bacilysin is an irreversible inactivator of the glutaminase domain of glucosamine synthetase. BacA is an unusual prephenate decarboxylase that avoids the typical aromatization of the cyclohexadienol ring of prephenate. BacA catalyzes the protonation of prephenate (1-carboxy-4-hydroxy-alpha-oxo-2,5-cyclohexadiene-1-propanoic acid) at C6 position, followed by a decarboxylation to produce the endocyclic-delta(4),delta(8)-7R-dihydro-hydroxyphenylpyruvate (en-H2HPP). En-H2HPP is able to undergo a slow nonenzymatic isomerization to produce the exocyclic-delta(3),delta(5)-dihydro-hydroxyphenylpyruvate (ex-H2HPP). BacA isomerizes only the pro-R double bond in prephenate. The polypeptide is Prephenate decarboxylase (Bacillus subtilis (strain 168)).